Consider the following 661-residue polypeptide: UvrABC system protein B (661 aa).

Residues 26-413 (KGINEGRKHQ…TPEMVEQIIR (388 aa)) enclose the Helicase ATP-binding domain. 39–46 (GATGTGKT) contacts ATP. The Beta-hairpin signature appears at 92-115 (YYDYYQPEAYVPQTDTFIEKDASI). The 167-residue stretch at 430–596 (QIDDLIGEIQ…TINKKIRDVI (167 aa)) folds into the Helicase C-terminal domain. Positions 625-660 (EKVIAQMESDMKEAAKALDFERAAELRDLLLELKSE) constitute a UVR domain.

The protein belongs to the UvrB family. As to quaternary structure, forms a heterotetramer with UvrA during the search for lesions. Interacts with UvrC in an incision complex.

The protein localises to the cytoplasm. Functionally, the UvrABC repair system catalyzes the recognition and processing of DNA lesions. A damage recognition complex composed of 2 UvrA and 2 UvrB subunits scans DNA for abnormalities. Upon binding of the UvrA(2)B(2) complex to a putative damaged site, the DNA wraps around one UvrB monomer. DNA wrap is dependent on ATP binding by UvrB and probably causes local melting of the DNA helix, facilitating insertion of UvrB beta-hairpin between the DNA strands. Then UvrB probes one DNA strand for the presence of a lesion. If a lesion is found the UvrA subunits dissociate and the UvrB-DNA preincision complex is formed. This complex is subsequently bound by UvrC and the second UvrB is released. If no lesion is found, the DNA wraps around the other UvrB subunit that will check the other stand for damage. The chain is UvrABC system protein B from Bacillus licheniformis (strain ATCC 14580 / DSM 13 / JCM 2505 / CCUG 7422 / NBRC 12200 / NCIMB 9375 / NCTC 10341 / NRRL NRS-1264 / Gibson 46).